Reading from the N-terminus, the 184-residue chain is Thymidine kinase (184 aa).

ATP is bound by residues 10 to 17 and 83 to 86; these read GPMYSGKT and DEVQ. Glu-84 serves as the catalytic Proton acceptor. 4 residues coordinate Zn(2+): Cys-140, Cys-143, Cys-173, and Cys-176.

The protein belongs to the thymidine kinase family. In terms of assembly, homotetramer.

It is found in the cytoplasm. It catalyses the reaction thymidine + ATP = dTMP + ADP + H(+). This Thermotoga sp. (strain RQ2) protein is Thymidine kinase.